We begin with the raw amino-acid sequence, 330 residues long: o-succinylbenzoate synthase (330 aa).

Residue lysine 130 is the Proton donor of the active site. Residues aspartate 155, glutamate 184, and aspartate 206 each contribute to the Mg(2+) site. Lysine 228 (proton acceptor) is an active-site residue.

This sequence belongs to the mandelate racemase/muconate lactonizing enzyme family. MenC type 1 subfamily. In terms of assembly, monomer. Requires a divalent metal cation as cofactor.

It catalyses the reaction (1R,6R)-6-hydroxy-2-succinyl-cyclohexa-2,4-diene-1-carboxylate = 2-succinylbenzoate + H2O. It participates in quinol/quinone metabolism; 1,4-dihydroxy-2-naphthoate biosynthesis; 1,4-dihydroxy-2-naphthoate from chorismate: step 4/7. Its pathway is cofactor biosynthesis; phylloquinone biosynthesis. Its function is as follows. Converts 2-succinyl-6-hydroxy-2,4-cyclohexadiene-1-carboxylate (SHCHC) to 2-succinylbenzoate (OSB). Does not show N-succinylamino acid racemase (NSAR) activity with N-succinyl-L-phenylglycine as substrate. The chain is o-succinylbenzoate synthase from Bdellovibrio bacteriovorus (strain ATCC 15356 / DSM 50701 / NCIMB 9529 / HD100).